Consider the following 184-residue polypeptide: Photosystem I assembly protein Ycf4 (184 aa).

2 helical membrane-spanning segments follow: residues 22–42 (FCWA…GTSS) and 57–77 (ILFF…LFIS).

The protein belongs to the Ycf4 family.

It is found in the plastid. It localises to the chloroplast thylakoid membrane. Its function is as follows. Seems to be required for the assembly of the photosystem I complex. The polypeptide is Photosystem I assembly protein Ycf4 (Phalaenopsis aphrodite subsp. formosana (Moth orchid)).